Here is a 543-residue protein sequence, read N- to C-terminus: Cytochrome P450 307a1 (543 aa).

Residue Ser219 is modified to Phosphoserine. Positions 440 to 460 are disordered; the sequence is FLEPSKEQSPKNSKGSDSGIE. The span at 449 to 460 shows a compositional bias: polar residues; sequence PKNSKGSDSGIE. Residue Cys485 participates in heme binding.

Belongs to the cytochrome P450 family. Requires heme as cofactor.

Its subcellular location is the endoplasmic reticulum membrane. The protein localises to the microsome membrane. Functionally, required for correct development of the embryonic midline glial cells which are necessary for the formation of distinct segmental commissures. In Drosophila melanogaster (Fruit fly), this protein is Cytochrome P450 307a1 (spo).